Here is a 97-residue protein sequence, read N- to C-terminus: UPF0125 protein plu3376 (97 aa).

This sequence belongs to the UPF0125 (RnfH) family.

The polypeptide is UPF0125 protein plu3376 (Photorhabdus laumondii subsp. laumondii (strain DSM 15139 / CIP 105565 / TT01) (Photorhabdus luminescens subsp. laumondii)).